Here is a 209-residue protein sequence, read N- to C-terminus: Imidazoleglycerol-phosphate dehydratase (209 aa).

It belongs to the imidazoleglycerol-phosphate dehydratase family.

It is found in the cytoplasm. The catalysed reaction is D-erythro-1-(imidazol-4-yl)glycerol 3-phosphate = 3-(imidazol-4-yl)-2-oxopropyl phosphate + H2O. It participates in amino-acid biosynthesis; L-histidine biosynthesis; L-histidine from 5-phospho-alpha-D-ribose 1-diphosphate: step 6/9. The polypeptide is Imidazoleglycerol-phosphate dehydratase (Paracidovorax citrulli (strain AAC00-1) (Acidovorax citrulli)).